We begin with the raw amino-acid sequence, 218 residues long: Oxidoreductase claN (218 aa).

NADP(+) is bound by residues Lys-38, Asp-57, and Asn-82. The active-site Proton donor is the Ser-134. Residues Tyr-148, Lys-152, and Thr-183 each contribute to the NADP(+) site. Tyr-148 serves as the catalytic Proton acceptor. Lys-152 functions as the Lowers pKa of active site Tyr in the catalytic mechanism.

The protein belongs to the short-chain dehydrogenases/reductases (SDR) family.

Its pathway is pigment biosynthesis. Its function is as follows. Oxidoreductase; part of the gene cluster that mediates the biosynthesis of the bianthraquinone cladofulvin, a conidial pigment not required for virulence but that plays a role in fitness and resistance to environmental stresses including UV light and low-temperature stress. The pathway begins with the synthesis of atrochrysone thioester by the polyketide synthase (PKS) claG. The atrochrysone carboxyl ACP thioesterase claF then breaks the thioester bond and releases the atrochrysone carboxylic acid from claG. This compound is decarboxylated by claH to yield emodin, which is further converted to chrysophanol hydroquinone by the reductase claC and the dehydratase claB. The cytochrome P450 monooxygenase claM then catalyzes the dimerization of nataloe-emodin to cladofulvin. The protein is Oxidoreductase claN of Passalora fulva (Tomato leaf mold).